A 69-amino-acid polypeptide reads, in one-letter code: U5-agatoxin-Ao1a (69 aa).

The signal sequence occupies residues 1–20 (MRTIISLLLLSAMVFAVIEA). A propeptide spanning residues 21-34 (ISLEEGLQLFEGER) is cleaved from the precursor. Intrachain disulfides connect cysteine 36-cysteine 52 and cysteine 43-cysteine 57.

It belongs to the neurotoxin 01 (U2-agtx) family. In terms of processing, does not contain a cysteine at position 61 which disrupts the cysteine framework. As to expression, expressed by the venom gland.

It localises to the secreted. The sequence is that of U5-agatoxin-Ao1a from Agelena orientalis (Funnel-web spider).